Here is a 127-residue protein sequence, read N- to C-terminus: Large ribosomal subunit protein eL8 (127 aa).

Belongs to the eukaryotic ribosomal protein eL8 family. In terms of assembly, part of the 50S ribosomal subunit. Probably part of the RNase P complex.

It is found in the cytoplasm. Its function is as follows. Multifunctional RNA-binding protein that recognizes the K-turn motif in ribosomal RNA, the RNA component of RNase P, box H/ACA, box C/D and box C'/D' sRNAs. This is Large ribosomal subunit protein eL8 from Desulfurococcus amylolyticus (strain DSM 18924 / JCM 16383 / VKM B-2413 / 1221n) (Desulfurococcus kamchatkensis).